We begin with the raw amino-acid sequence, 128 residues long: Sulfurtransferase TusD (128 aa).

The active-site Cysteine persulfide intermediate is the C78.

It belongs to the DsrE/TusD family. As to quaternary structure, heterohexamer, formed by a dimer of trimers. The hexameric TusBCD complex contains 2 copies each of TusB, TusC and TusD. The TusBCD complex interacts with TusE.

It localises to the cytoplasm. In terms of biological role, part of a sulfur-relay system required for 2-thiolation of 5-methylaminomethyl-2-thiouridine (mnm(5)s(2)U) at tRNA wobble positions. Accepts sulfur from TusA and transfers it in turn to TusE. In Escherichia coli O7:K1 (strain IAI39 / ExPEC), this protein is Sulfurtransferase TusD.